The sequence spans 436 residues: Chromosomal replication initiator protein DnaA (436 aa).

Residues 1–69 are domain I, interacts with DnaA modulators; the sequence is MLADEILELL…AYLYEVKTGK (69 aa). Residues 69 to 99 form a domain II region; it reads KKPEVEITSQTKLKNIKQNQVNVKQIKAQSS. Residues 100-314 are domain III, AAA+ region; the sequence is ILNPGYTFEN…GAIINLNAYA (215 aa). Residues Gly144, Gly146, Lys147, and Thr148 each coordinate ATP. The segment at 315–436 is domain IV, binds dsDNA; it reads SLMRVEITLE…EIKNKILTKG (122 aa).

It belongs to the DnaA family. Oligomerizes as a right-handed, spiral filament on DNA at oriC.

The protein resides in the cytoplasm. Functionally, plays an essential role in the initiation and regulation of chromosomal replication. ATP-DnaA binds to the origin of replication (oriC) to initiate formation of the DNA replication initiation complex once per cell cycle. Binds the DnaA box (a 9 base pair repeat at the origin) and separates the double-stranded (ds)DNA. Forms a right-handed helical filament on oriC DNA; dsDNA binds to the exterior of the filament while single-stranded (ss)DNA is stabiized in the filament's interior. The ATP-DnaA-oriC complex binds and stabilizes one strand of the AT-rich DNA unwinding element (DUE), permitting loading of DNA polymerase. After initiation quickly degrades to an ADP-DnaA complex that is not apt for DNA replication. Binds acidic phospholipids. The protein is Chromosomal replication initiator protein DnaA of Campylobacter concisus (strain 13826).